Here is a 121-residue protein sequence, read N- to C-terminus: Large ribosomal subunit protein bL20c (121 aa).

Belongs to the bacterial ribosomal protein bL20 family.

The protein localises to the plastid. Its subcellular location is the chloroplast. In terms of biological role, binds directly to 23S ribosomal RNA and is necessary for the in vitro assembly process of the 50S ribosomal subunit. It is not involved in the protein synthesizing functions of that subunit. This Lotus japonicus (Lotus corniculatus var. japonicus) protein is Large ribosomal subunit protein bL20c.